The primary structure comprises 445 residues: Cytoplasmic tRNA 2-thiolation protein 2 (445 aa).

The segment covering 1–11 has biased composition (acidic residues); sequence MCSIGEDDFGD. Positions 1–26 are disordered; it reads MCSIGEDDFGDEGGVHAMKEESPLPE. Basic and acidic residues predominate over residues 13-22; that stretch reads GGVHAMKEES.

The protein belongs to the CTU2/NCS2 family.

The protein localises to the cytoplasm. The protein operates within tRNA modification; 5-methoxycarbonylmethyl-2-thiouridine-tRNA biosynthesis. Its function is as follows. Plays a central role in 2-thiolation of mcm(5)S(2)U at tRNA wobble positions of tRNA(Lys), tRNA(Glu) and tRNA(Gln). May act by forming a heterodimer with NCS6/CTU1 that ligates sulfur from thiocarboxylated URM1 onto the uridine of tRNAs at wobble position. This Aedes aegypti (Yellowfever mosquito) protein is Cytoplasmic tRNA 2-thiolation protein 2.